The following is a 314-amino-acid chain: Ribose-phosphate pyrophosphokinase (314 aa).

ATP is bound by residues 37-39 and 96-97; these read DGE and RQ. Mg(2+)-binding residues include H131 and D170. Residue K194 is part of the active site. D-ribose 5-phosphate is bound by residues R196, D220, and 224 to 228; that span reads DTGGT.

It belongs to the ribose-phosphate pyrophosphokinase family. Class I subfamily. As to quaternary structure, homohexamer. Requires Mg(2+) as cofactor.

Its subcellular location is the cytoplasm. It catalyses the reaction D-ribose 5-phosphate + ATP = 5-phospho-alpha-D-ribose 1-diphosphate + AMP + H(+). The protein operates within metabolic intermediate biosynthesis; 5-phospho-alpha-D-ribose 1-diphosphate biosynthesis; 5-phospho-alpha-D-ribose 1-diphosphate from D-ribose 5-phosphate (route I): step 1/1. Functionally, involved in the biosynthesis of the central metabolite phospho-alpha-D-ribosyl-1-pyrophosphate (PRPP) via the transfer of pyrophosphoryl group from ATP to 1-hydroxyl of ribose-5-phosphate (Rib-5-P). This chain is Ribose-phosphate pyrophosphokinase, found in Vibrio parahaemolyticus serotype O3:K6 (strain RIMD 2210633).